We begin with the raw amino-acid sequence, 72 residues long: Translation initiation factor IF-1 (72 aa).

One can recognise an S1-like domain in the interval 1 to 72 (MAKDGVIEVE…NRGRITYRYK (72 aa)).

Belongs to the IF-1 family. In terms of assembly, component of the 30S ribosomal translation pre-initiation complex which assembles on the 30S ribosome in the order IF-2 and IF-3, IF-1 and N-formylmethionyl-tRNA(fMet); mRNA recruitment can occur at any time during PIC assembly.

It is found in the cytoplasm. Functionally, one of the essential components for the initiation of protein synthesis. Stabilizes the binding of IF-2 and IF-3 on the 30S subunit to which N-formylmethionyl-tRNA(fMet) subsequently binds. Helps modulate mRNA selection, yielding the 30S pre-initiation complex (PIC). Upon addition of the 50S ribosomal subunit IF-1, IF-2 and IF-3 are released leaving the mature 70S translation initiation complex. This chain is Translation initiation factor IF-1, found in Bifidobacterium adolescentis (strain ATCC 15703 / DSM 20083 / NCTC 11814 / E194a).